The chain runs to 407 residues: Serine hydroxymethyltransferase (407 aa).

(6S)-5,6,7,8-tetrahydrofolate-binding positions include Leu117 and 121-123 (GHL). Lys226 is subject to N6-(pyridoxal phosphate)lysine. Residue Glu242 participates in (6S)-5,6,7,8-tetrahydrofolate binding.

This sequence belongs to the SHMT family. In terms of assembly, homodimer. The cofactor is pyridoxal 5'-phosphate.

The protein resides in the cytoplasm. It carries out the reaction (6R)-5,10-methylene-5,6,7,8-tetrahydrofolate + glycine + H2O = (6S)-5,6,7,8-tetrahydrofolate + L-serine. Its pathway is one-carbon metabolism; tetrahydrofolate interconversion. It participates in amino-acid biosynthesis; glycine biosynthesis; glycine from L-serine: step 1/1. Catalyzes the reversible interconversion of serine and glycine with tetrahydrofolate (THF) serving as the one-carbon carrier. This reaction serves as the major source of one-carbon groups required for the biosynthesis of purines, thymidylate, methionine, and other important biomolecules. Also exhibits THF-independent aldolase activity toward beta-hydroxyamino acids, producing glycine and aldehydes, via a retro-aldol mechanism. This Thermus thermophilus (strain ATCC BAA-163 / DSM 7039 / HB27) protein is Serine hydroxymethyltransferase.